Here is a 132-residue protein sequence, read N- to C-terminus: MTMTDPIADMLSRVRNASNAFHESVSMPSSKIKANIAEILKEEGYIADYTVNDAKVGKTLDIELKYGPSRERSISGLRRVSKPGLRVYAKSNELPQVLGGLGVAIISTSHGLLTDREAQNKGVGGEVLAYVW.

It belongs to the universal ribosomal protein uS8 family. As to quaternary structure, part of the 30S ribosomal subunit. Contacts proteins S5 and S12.

Its function is as follows. One of the primary rRNA binding proteins, it binds directly to 16S rRNA central domain where it helps coordinate assembly of the platform of the 30S subunit. This is Small ribosomal subunit protein uS8 from Corynebacterium jeikeium (strain K411).